The sequence spans 245 residues: 2,3-bisphosphoglycerate-dependent phosphoglycerate mutase (245 aa).

Residues 8–15 (RHGQSLWN), 21–22 (TG), R60, 87–90 (ERHY), K98, 114–115 (RR), and 183–184 (GN) contribute to the substrate site. H9 serves as the catalytic Tele-phosphohistidine intermediate. E87 serves as the catalytic Proton donor/acceptor.

Belongs to the phosphoglycerate mutase family. BPG-dependent PGAM subfamily.

The enzyme catalyses (2R)-2-phosphoglycerate = (2R)-3-phosphoglycerate. The protein operates within carbohydrate degradation; glycolysis; pyruvate from D-glyceraldehyde 3-phosphate: step 3/5. Catalyzes the interconversion of 2-phosphoglycerate and 3-phosphoglycerate. In Bacillus thuringiensis (strain Al Hakam), this protein is 2,3-bisphosphoglycerate-dependent phosphoglycerate mutase.